The primary structure comprises 761 residues: Ribonucleoside-diphosphate reductase 1 subunit alpha (761 aa).

The ATP-cone domain maps to 5–95 (LLVTKRDGST…IFHLRKKAYG (91 aa)). ATP-binding positions include K9, 15–21 (ERINLDK), T55, and K91. T209 contacts GDP. C225 and C462 are joined by a disulfide. DTTP is bound by residues 232-234 (DSL), R262, and R269. Position 283 is an N6-acetyllysine (K283). N437 is a GDP binding site. N437 functions as the Proton acceptor in the catalytic mechanism. The Cysteine radical intermediate role is filled by C439. GDP is bound by residues E441 and 623–625 (ETS). The active-site Proton acceptor is E441.

Belongs to the ribonucleoside diphosphate reductase large chain family. In terms of assembly, tetramer of two alpha (R1) and two beta (R2) subunits. The B1 protein is a dimer of alpha subunits. A radical transfer pathway occurs between 'Tyr-122' of R2 and R1. Post-translationally, binding of the substrate occurs primarily when the active-site cysteines are reduced.

The enzyme catalyses a 2'-deoxyribonucleoside 5'-diphosphate + [thioredoxin]-disulfide + H2O = a ribonucleoside 5'-diphosphate + [thioredoxin]-dithiol. Its activity is regulated as follows. Under complex allosteric control mediated by deoxynucleoside triphosphates and ATP binding to separate specificity and activation sites on the alpha subunit. The type of nucleotide bound at the specificity site determines substrate preference. It seems probable that ATP makes the enzyme reduce CDP and UDP, dGTP favors ADP reduction and dTTP favors GDP reduction. Stimulated by ATP and inhibited by dATP binding to the activity site. In vitro, its activity is increased by dithiothreitol (DTT) or thioredoxins (non-specific). Inhibited by hydroxyurea, leads to dNTP depletion, replication fork arrest and genomic instability. In terms of biological role, provides the precursors necessary for DNA synthesis. Catalyzes the biosynthesis of deoxyribonucleotides from the corresponding ribonucleotides. R1 contains the binding sites for both substrates and allosteric effectors and carries out the actual reduction of the ribonucleotide. It also provides redox-active cysteines. This Escherichia coli (strain K12) protein is Ribonucleoside-diphosphate reductase 1 subunit alpha (nrdA).